A 215-amino-acid polypeptide reads, in one-letter code: Large ribosomal subunit protein uL4 (215 aa).

The tract at residues 46–76 (TAKSKNRAEVSGGGRKPWAQKGGGRARAGSI) is disordered. Positions 56 to 71 (SGGGRKPWAQKGGGRA) are enriched in gly residues.

Belongs to the universal ribosomal protein uL4 family. Part of the 50S ribosomal subunit.

Functionally, one of the primary rRNA binding proteins, this protein initially binds near the 5'-end of the 23S rRNA. It is important during the early stages of 50S assembly. It makes multiple contacts with different domains of the 23S rRNA in the assembled 50S subunit and ribosome. Forms part of the polypeptide exit tunnel. In Helicobacter acinonychis (strain Sheeba), this protein is Large ribosomal subunit protein uL4.